The primary structure comprises 358 residues: Golgi-resident adenosine 3',5'-bisphosphate 3'-phosphatase (358 aa).

Met-1 is subject to N-acetylmethionine. Over 1–12 the chain is Cytoplasmic; that stretch reads MAPMGIRLSPLG. Residues 13–33 form a helical membrane-spanning segment; the sequence is VAVFCLLGLGVLYHLYSGFLA. Topologically, residues 34–358 are lumenal; the sequence is GRFSLFGLGG…KLPDLEKMGH (325 aa). The interval 85–106 is disordered; the sequence is RESNVLHEKSKGKTREGADDKM. Asp-110 functions as the Proton acceptor in the catalytic mechanism. Mg(2+) is bound by residues Glu-133, Asp-174, Leu-176, and Asp-177. Residue Thr-179 is the Proton acceptor of the active site. AMP contacts are provided by Ser-242 and His-245. N-linked (GlcNAc...) asparagine glycosylation is present at Asn-259. 2 residues coordinate AMP: Gly-268 and Lys-272. Asp-300 provides a ligand contact to Mg(2+).

It belongs to the inositol monophosphatase superfamily. It depends on Mg(2+) as a cofactor. In terms of processing, contains N-linked glycan resistant to endoglycosydase H.

It localises to the golgi apparatus. The protein resides in the trans-Golgi network membrane. It carries out the reaction adenosine 3',5'-bisphosphate + H2O = AMP + phosphate. It functions in the pathway sulfur metabolism. With respect to regulation, strongly inhibited by lithium. Functionally, exhibits 3'-nucleotidase activity toward adenosine 3',5'-bisphosphate (PAP), namely hydrolyzes adenosine 3',5'-bisphosphate into adenosine 5'-monophosphate (AMP) and a phosphate. May play a role in the formation of skeletal elements derived through endochondral ossification, possibly by clearing adenosine 3',5'-bisphosphate produced by Golgi sulfotransferases during glycosaminoglycan sulfation. Has no activity toward 3'-phosphoadenosine 5'-phosphosulfate (PAPS) or inositol phosphate (IP) substrates including I(1)P, I(1,4)P2, I(1,3,4)P3, I(1,4,5)P3 and I(1,3,4,5)P4. This is Golgi-resident adenosine 3',5'-bisphosphate 3'-phosphatase (BPNT2) from Callithrix jacchus (White-tufted-ear marmoset).